The following is a 141-amino-acid chain: Hemoglobin subunit alpha (141 aa).

The 141-residue stretch at 1–141 (VLSSDDKCNV…VSSVLTSKYR (141 aa)) folds into the Globin domain. Position 58 (histidine 58) interacts with O2. Histidine 87 contributes to the heme b binding site.

It belongs to the globin family. In terms of assembly, heterotetramer of two alpha chains and two beta chains. Red blood cells.

Involved in oxygen transport from the lung to the various peripheral tissues. This is Hemoglobin subunit alpha (HBA) from Crocodylus niloticus (Nile crocodile).